The primary structure comprises 213 residues: Probable RNA 2'-phosphotransferase (213 aa).

This sequence belongs to the KptA/TPT1 family.

Its function is as follows. Removes the 2'-phosphate from RNA via an intermediate in which the phosphate is ADP-ribosylated by NAD followed by a presumed transesterification to release the RNA and generate ADP-ribose 1''-2''-cyclic phosphate (APPR&gt;P). May function as an ADP-ribosylase. The sequence is that of Probable RNA 2'-phosphotransferase from Pyrobaculum aerophilum (strain ATCC 51768 / DSM 7523 / JCM 9630 / CIP 104966 / NBRC 100827 / IM2).